The chain runs to 223 residues: dITP/XTP pyrophosphatase (223 aa).

9 to 14 (TTNQNK) is a substrate binding site. The active-site Proton acceptor is Asp71. Position 71 (Asp71) interacts with Mg(2+). Substrate contacts are provided by residues Ser72, 152–155 (FGYD), Lys175, and 180–181 (HR). A disordered region spans residues 203–223 (LSEEKPAKPDHSEFEGNDWSK).

The protein belongs to the HAM1 NTPase family. Homodimer. The cofactor is Mg(2+).

The enzyme catalyses XTP + H2O = XMP + diphosphate + H(+). The catalysed reaction is dITP + H2O = dIMP + diphosphate + H(+). It carries out the reaction ITP + H2O = IMP + diphosphate + H(+). Functionally, pyrophosphatase that catalyzes the hydrolysis of nucleoside triphosphates to their monophosphate derivatives, with a high preference for the non-canonical purine nucleotides XTP (xanthosine triphosphate), dITP (deoxyinosine triphosphate) and ITP. Seems to function as a house-cleaning enzyme that removes non-canonical purine nucleotides from the nucleotide pool, thus preventing their incorporation into DNA/RNA and avoiding chromosomal lesions. This Desulfotalea psychrophila (strain LSv54 / DSM 12343) protein is dITP/XTP pyrophosphatase.